The following is a 291-amino-acid chain: Undecaprenyl-diphosphatase 2 (291 aa).

The next 6 helical transmembrane spans lie at 39–59, 85–105, 118–138, 203–223, 231–251, and 262–282; these read PGAAFTAITQIGTEAAVLIYF, AQMGWLVIVGSIPIGVLGVTL, ITATMLIVMGVILGIADRLAA, FLLAIPAVLASGVFELKDAAA, PTVFATVIAFVSGYAVIAWFM, and FVWYRIALGIAIIALVATGAL.

It belongs to the UppP family.

The protein resides in the cell membrane. It catalyses the reaction di-trans,octa-cis-undecaprenyl diphosphate + H2O = di-trans,octa-cis-undecaprenyl phosphate + phosphate + H(+). Its function is as follows. Catalyzes the dephosphorylation of undecaprenyl diphosphate (UPP). Confers resistance to bacitracin. This is Undecaprenyl-diphosphatase 2 from Streptomyces avermitilis (strain ATCC 31267 / DSM 46492 / JCM 5070 / NBRC 14893 / NCIMB 12804 / NRRL 8165 / MA-4680).